We begin with the raw amino-acid sequence, 157 residues long: Transcription inhibitor protein Gfh1 (157 aa).

Residues 1–74 (MAREVKLTKA…LEDVLSRAVI (74 aa)) adopt a coiled-coil conformation.

The protein belongs to the GreA/GreB family. In terms of assembly, interacts with RNAP.

In terms of biological role, inhibits all catalytic activities of RNA polymerase (RNAP) by partially occluding its substrate-binding site and preventing NTP binding. In Thermus aquaticus, this protein is Transcription inhibitor protein Gfh1 (gfh1).